Reading from the N-terminus, the 255-residue chain is Malonyl-[acyl-carrier protein] O-methyltransferase (255 aa).

It belongs to the methyltransferase superfamily.

It catalyses the reaction malonyl-[ACP] + S-adenosyl-L-methionine = malonyl-[ACP] methyl ester + S-adenosyl-L-homocysteine. The protein operates within cofactor biosynthesis; biotin biosynthesis. Its function is as follows. Converts the free carboxyl group of a malonyl-thioester to its methyl ester by transfer of a methyl group from S-adenosyl-L-methionine (SAM). It allows to synthesize pimeloyl-ACP via the fatty acid synthetic pathway. The chain is Malonyl-[acyl-carrier protein] O-methyltransferase from Porphyromonas gingivalis (strain ATCC BAA-308 / W83).